Reading from the N-terminus, the 215-residue chain is Cytochrome b6 (215 aa).

Residues 32-52 form a helical membrane-spanning segment; sequence IFYCLGGITLTCFIVQVATGF. C35 contributes to the heme c binding site. Heme b-binding residues include H86 and H100. The next 3 helical transmembrane spans lie at 90 to 110, 116 to 136, and 186 to 206; these read ASMMVLNMILHVCRVYLTGGF, LTWVTGVLLASVTVSFGVTGY, and AHTFVLPVVAAVLMLTHFVMI. Residues H187 and H202 each coordinate heme b.

Belongs to the cytochrome b family. PetB subfamily. As to quaternary structure, the 4 large subunits of the cytochrome b6-f complex are cytochrome b6, subunit IV (17 kDa polypeptide, PetD), cytochrome f and the Rieske protein, while the 4 small subunits are PetG, PetL, PetM and PetN. The complex functions as a dimer. Heme b is required as a cofactor. Heme c serves as cofactor.

It localises to the plastid. Its subcellular location is the chloroplast thylakoid membrane. In terms of biological role, component of the cytochrome b6-f complex, which mediates electron transfer between photosystem II (PSII) and photosystem I (PSI), cyclic electron flow around PSI, and state transitions. The polypeptide is Cytochrome b6 (Emiliania huxleyi (Coccolithophore)).